Here is a 782-residue protein sequence, read N- to C-terminus: Coiled-coil alpha-helical rod protein 1 (782 aa).

2 stretches are compositionally biased toward basic and acidic residues: residues 62–74 (ERDV…EPGR) and 208–218 (ETRRAGEAKEL). Disordered stretches follow at residues 62–82 (ERDV…WGLE) and 185–218 (AHKE…AKEL). 3 coiled-coil regions span residues 82–314 (EGSQ…ELTR), 344–398 (LMVQ…EVER), and 498–691 (VTDV…QQEG).

The protein resides in the cytoplasm. It localises to the nucleus. Functionally, may be a regulator of keratinocyte proliferation or differentiation. This chain is Coiled-coil alpha-helical rod protein 1 (CCHCR1), found in Gorilla gorilla gorilla (Western lowland gorilla).